Here is a 608-residue protein sequence, read N- to C-terminus: MSMPFSVLAETFEKLERVTARTQMLLYLVELFKKTPPEIIDKVVYFIQGKLWPDWKGLPELGIGEKMLIKAASIALHVSEKQIEQLVKKLGDTGKAIEMIKREKQQKQKAVGLLAFMQKPSGGESTLTVEKVYDTLARIALVQGEGSRDIKLKLLAGLLAEASPREAKYIARFVEGRLRLGVGDATIMEALAVVYGGSAAMRSVVERAYNLRADLGMVAKILATQGIDALKNIKPEVGVPIRPMLAERLNDPVEIIKKLGGRALVEYKYDGERAQIHKKGDKIWIFSRRLENITHMYPDVVEMAKKGIKAEEAIVEGEIVAIDPETGEFRPFQVLMHRRRKKDVHAVLSEIPVAVFLFDTLYVNGEDLTLKPLPARHEVLEKIIEQSDTWRIAEGIVTSDPQELESFFLKAIEDGAEGVMAKAIHDRSIYQAGARGWLWIKYKRDYKSEMSDTVDLVVIGAFYGKGRRGGKFGALLMAAYDPDTDTFKSVCKVGSGFTDEDLERLDDMLKPYISDKKPARVDSQMKPDVWVEPTLVAEIIGAELTLSPIHTCCYGWVKSGAGISIRFPRFIRWRPDKGPEDATTTKELYEMYKRQLRRIKEEEAPTGV.

Residue E266 coordinates ATP. The N6-AMP-lysine intermediate role is filled by K268. ATP-binding residues include R273, R288, E318, F358, R435, and K441.

Belongs to the ATP-dependent DNA ligase family. Requires Mg(2+) as cofactor. Mn(2+) is required as a cofactor.

It carries out the reaction ATP + (deoxyribonucleotide)n-3'-hydroxyl + 5'-phospho-(deoxyribonucleotide)m = (deoxyribonucleotide)n+m + AMP + diphosphate.. It catalyses the reaction ADP + (deoxyribonucleotide)n-3'-hydroxyl + 5'-phospho-(deoxyribonucleotide)m = (deoxyribonucleotide)n+m + AMP + phosphate.. The catalysed reaction is GTP + (deoxyribonucleotide)n-3'-hydroxyl + 5'-phospho-(deoxyribonucleotide)m = (deoxyribonucleotide)n+m + GMP + diphosphate.. Its function is as follows. DNA ligase that seals nicks in double-stranded DNA during DNA replication, DNA recombination and DNA repair. Can use ATP, ADP and GTP, but not CTP, TTP or NAD(+). The chain is DNA ligase from Hyperthermus butylicus (strain DSM 5456 / JCM 9403 / PLM1-5).